A 158-amino-acid polypeptide reads, in one-letter code: Frataxin homolog, mitochondrial (158 aa).

It belongs to the frataxin family. As to quaternary structure, monomer. Oligomer.

It localises to the mitochondrion. The catalysed reaction is 4 Fe(2+) + O2 + 4 H(+) = 4 Fe(3+) + 2 H2O. Functionally, promotes the biosynthesis of heme as well as the assembly and repair of iron-sulfur clusters by delivering Fe(2+) to proteins involved in these pathways. May play a role in the protection against iron-catalyzed oxidative stress through its ability to catalyze the oxidation of Fe(2+) to Fe(3+). May be able to store large amounts of the metal in the form of a ferrihydrite mineral by oligomerization. In Schizosaccharomyces pombe (strain 972 / ATCC 24843) (Fission yeast), this protein is Frataxin homolog, mitochondrial.